Consider the following 134-residue polypeptide: DNA-directed RNA polymerase subunit omega (134 aa).

This sequence belongs to the RNA polymerase subunit omega family. The RNAP catalytic core consists of 2 alpha, 1 beta, 1 beta' and 1 omega subunit. When a sigma factor is associated with the core the holoenzyme is formed, which can initiate transcription.

It catalyses the reaction RNA(n) + a ribonucleoside 5'-triphosphate = RNA(n+1) + diphosphate. In terms of biological role, promotes RNA polymerase assembly. Latches the N- and C-terminal regions of the beta' subunit thereby facilitating its interaction with the beta and alpha subunits. The protein is DNA-directed RNA polymerase subunit omega of Rhizobium johnstonii (strain DSM 114642 / LMG 32736 / 3841) (Rhizobium leguminosarum bv. viciae).